A 637-amino-acid polypeptide reads, in one-letter code: Zinc-transporting ATPase (637 aa).

4 consecutive transmembrane segments (helical) span residues 43 to 63 (GWLL…AFVI), 89 to 109 (IFAA…ILIF), 258 to 278 (GVLI…GWSW), and 286 to 306 (MVFM…PAAL). The active-site 4-aspartylphosphate intermediate is aspartate 337. Positions 535 and 539 each coordinate Mg(2+). Residues 599–619 (VICLLICANFLQAMELPFGVI) form a helical membrane-spanning segment.

Belongs to the cation transport ATPase (P-type) (TC 3.A.3) family. Type IB subfamily.

The protein localises to the cell membrane. The enzyme catalyses Zn(2+)(out) + ATP(in) + H2O(in) = Zn(2+)(in) + ADP(in) + phosphate(in) + H(+)(in). In terms of biological role, couples the hydrolysis of ATP with the transport of zinc into the cell. Plays an important role in protecting cells against oxidative stress. ZosA-mediated zinc transport is required for post-transcriptional control of comK and competence development. This Bacillus subtilis (strain 168) protein is Zinc-transporting ATPase (zosA).